The chain runs to 693 residues: Glycine--tRNA ligase beta subunit (693 aa).

Belongs to the class-II aminoacyl-tRNA synthetase family. As to quaternary structure, tetramer of two alpha and two beta subunits.

The protein localises to the cytoplasm. It carries out the reaction tRNA(Gly) + glycine + ATP = glycyl-tRNA(Gly) + AMP + diphosphate. This Vibrio vulnificus (strain YJ016) protein is Glycine--tRNA ligase beta subunit.